The chain runs to 254 residues: MTILPISAFSDNYIWTFIDKIAGVLDCVDPGESAPIIRFAQSNQLTLRTILLTHHHYDHIGGVDSLIKQWPSCKVYGPIDERISNLTHPIKQGQSVQVGSLHFHILFNPGHTSTHISYYEPQQGWLFCGDTLFSAGCGRVFDGTIEELHESLLLFKKLPRNTKIFCAHEYTLQNLKFAHTVEPCNSSVINYMQQILKQPSPCTLPSNIDLELSINPFLRTDKEQVKQYALSHGANSSDSLDVFEVLRNQKNSFK.

The Zn(2+) site is built by H54, H56, D58, H59, H111, D130, and H168.

Belongs to the metallo-beta-lactamase superfamily. Glyoxalase II family. Monomer. Requires Zn(2+) as cofactor.

The enzyme catalyses an S-(2-hydroxyacyl)glutathione + H2O = a 2-hydroxy carboxylate + glutathione + H(+). It functions in the pathway secondary metabolite metabolism; methylglyoxal degradation; (R)-lactate from methylglyoxal: step 2/2. In terms of biological role, thiolesterase that catalyzes the hydrolysis of S-D-lactoyl-glutathione to form glutathione and D-lactic acid. This chain is Hydroxyacylglutathione hydrolase, found in Legionella pneumophila (strain Lens).